The following is a 360-amino-acid chain: Phospho-N-acetylmuramoyl-pentapeptide-transferase (360 aa).

Helical transmembrane passes span 2 to 22 (IAIL…TPLF), 52 to 72 (MGGV…NISA), 80 to 100 (GLLL…DDFI), 114 to 134 (WKII…LQFP), 156 to 176 (LAFA…NFLI), 189 to 209 (LDGL…VVTM), 235 to 255 (LAIV…WNAS), 259 to 279 (IFMG…LSIL), 284 to 304 (FLAV…VIQI), and 338 to 358 (FWLI…AEWV).

This sequence belongs to the glycosyltransferase 4 family. MraY subfamily. Requires Mg(2+) as cofactor.

The protein localises to the cell membrane. The enzyme catalyses UDP-N-acetyl-alpha-D-muramoyl-L-alanyl-gamma-D-glutamyl-meso-2,6-diaminopimeloyl-D-alanyl-D-alanine + di-trans,octa-cis-undecaprenyl phosphate = di-trans,octa-cis-undecaprenyl diphospho-N-acetyl-alpha-D-muramoyl-L-alanyl-D-glutamyl-meso-2,6-diaminopimeloyl-D-alanyl-D-alanine + UMP. The protein operates within cell wall biogenesis; peptidoglycan biosynthesis. Functionally, catalyzes the initial step of the lipid cycle reactions in the biosynthesis of the cell wall peptidoglycan: transfers peptidoglycan precursor phospho-MurNAc-pentapeptide from UDP-MurNAc-pentapeptide onto the lipid carrier undecaprenyl phosphate, yielding undecaprenyl-pyrophosphoryl-MurNAc-pentapeptide, known as lipid I. The polypeptide is Phospho-N-acetylmuramoyl-pentapeptide-transferase (Beutenbergia cavernae (strain ATCC BAA-8 / DSM 12333 / CCUG 43141 / JCM 11478 / NBRC 16432 / NCIMB 13614 / HKI 0122)).